A 138-amino-acid polypeptide reads, in one-letter code: ATP synthase epsilon chain (138 aa).

Belongs to the ATPase epsilon chain family. F-type ATPases have 2 components, CF(1) - the catalytic core - and CF(0) - the membrane proton channel. CF(1) has five subunits: alpha(3), beta(3), gamma(1), delta(1), epsilon(1). CF(0) has three main subunits: a, b and c.

It is found in the cellular thylakoid membrane. Its function is as follows. Produces ATP from ADP in the presence of a proton gradient across the membrane. This is ATP synthase epsilon chain (atpC) from Synechococcus sp. (strain PCC 6716).